Reading from the N-terminus, the 202-residue chain is Protein N-terminal glutamine amidohydrolase (202 aa).

Catalysis depends on residues Cys-27, His-80, and Asp-96.

It belongs to the NTAQ1 family. Monomer.

Its subcellular location is the cytoplasm. It localises to the cytosol. The protein resides in the nucleus. The catalysed reaction is N-terminal L-glutaminyl-[protein] + H2O = N-terminal L-glutamyl-[protein] + NH4(+). In terms of biological role, mediates the side-chain deamidation of N-terminal glutamine residues to glutamate, an important step in N-end rule pathway of protein degradation. Conversion of the resulting N-terminal glutamine to glutamate renders the protein susceptible to arginylation, polyubiquitination and degradation as specified by the N-end rule. Does not act on substrates with internal or C-terminal glutamine and does not act on non-glutamine residues in any position. Does not deaminate acetylated N-terminal glutamine. With the exception of proline, all tested second-position residues on substrate peptides do not greatly influence the activity. In contrast, a proline at position 2, virtually abolishes deamidation of N-terminal glutamine. This is Protein N-terminal glutamine amidohydrolase (ntaq1) from Danio rerio (Zebrafish).